We begin with the raw amino-acid sequence, 159 residues long: Lipoprotein LpqH (159 aa).

An N-terminal signal peptide occupies residues 1-21; the sequence is MKRGLTVAVAGAAILVAGLSG. Cysteine 22 is lipidated: N-palmitoyl cysteine. The S-diacylglycerol cysteine moiety is linked to residue cysteine 22. The disordered stretch occupies residues 24–51; it reads SNKSTTGSGETTTAAGTTASPGAASGPK. A compositionally biased stretch (low complexity) spans 27–49; the sequence is STTGSGETTTAAGTTASPGAASG.

The protein belongs to the mycobacterial 19 kDa antigen family. In terms of processing, modified by Lgt on Cys-22 with an S-linked diacylglycerol with a mixture of C16, C18 and C19 fatty acids, signal peptide is removed by LspA, modifed by Lnt with an amide-linked mixture of C16 and C19 fatty acids.

The protein localises to the cell membrane. In terms of biological role, might be involved in ligand transport. A host TLR2 agonist, modifies host gene expression in response to pathogen. The chain is Lipoprotein LpqH (lpqH) from Mycobacterium tuberculosis (strain CDC 1551 / Oshkosh).